The chain runs to 628 residues: MFNLRNFDVIVVGAGHAGTEAAMASSRMGCKTLLLTQKISDLGALSCNPAIGGIGKSHLVKEIDALGGMMAKAIDYSGIQFRILNSSKGPAVRSTRAQADKILYHETVKKILKKQNNLLILEAEVKDLIFKNYSVVGVLTQNEINFYSRSVVLAAGTFLGGKIHIGLKSYSAGRIGDKSAIDLSVRLRELSLRVNRLKTGTPPRIDINTVNFNNLLIQNSDTPVPVFSFMGNVSHHPKQIPCYLTHTNEKTHEIIRKNLDKSPIYTGFLKGLGPRYCPSIEDKIVRFPDRKSHQVFLEPEGLSSIKVYPNGISTSLPIEVQEQIVASIKGLEKSKIIRPGYAIEYDFFDPKDLNLTLESKLIKGLFFAGQINGTTGYEEAASQGLLAGLNAALSSKNTEGWFPRRDQAYLGVLIDDLTTQGTEEPYRMFTSRAEYRLSLREDNADLRLTEIGRKLGLVNDSRWIRYNQKVLNIQTEMNRLKKNKISPISPDADILKKLYNINLIKEISMSELLKRPQIRYQDLQSLESFRTGIVDLEAIGQIENEIKYAGYIKRQSEEIERHLKNENTFLSSIYDYNKIRGLSSEVVKKLNDYKPISIGQASRISGITPAAISILLIHLKKESYKHTL.

13-18 is an FAD binding site; that stretch reads GAGHAG. 273–287 contributes to the NAD(+) binding site; the sequence is GPRYCPSIEDKIVRF.

Belongs to the MnmG family. As to quaternary structure, homodimer. Heterotetramer of two MnmE and two MnmG subunits. Requires FAD as cofactor.

Its subcellular location is the cytoplasm. Functionally, NAD-binding protein involved in the addition of a carboxymethylaminomethyl (cmnm) group at the wobble position (U34) of certain tRNAs, forming tRNA-cmnm(5)s(2)U34. The chain is tRNA uridine 5-carboxymethylaminomethyl modification enzyme MnmG from Buchnera aphidicola subsp. Acyrthosiphon pisum (strain APS) (Acyrthosiphon pisum symbiotic bacterium).